Reading from the N-terminus, the 277-residue chain is Protein G1-like2 (277 aa).

Residues Met1–Glu16 are compositionally biased toward gly residues. Disordered stretches follow at residues Met1–Arg28, Arg141–Phe203, and His225–Gly245. Basic and acidic residues predominate over residues Arg19–Arg28. An ALOG domain is found at Arg22 to Arg149. A Nuclear localization signal motif is present at residues Lys147–Lys151. Residues Pro154–Ala177 show a composition bias toward low complexity. Residues Ser178–Thr187 show a composition bias toward pro residues.

It belongs to the plant homeotic and developmental regulators ALOG protein family.

It localises to the nucleus. Its function is as follows. Probable transcription regulator that acts as a developmental regulator by promoting cell growth in response to light. This is Protein G1-like2 (G1L2) from Oryza sativa subsp. japonica (Rice).